A 707-amino-acid chain; its full sequence is Keratin, type II cytoskeletal 2 epidermal (707 aa).

The segment at 1 to 20 (MSCQISCRSRRGGGGGGGGG) is disordered. The head stretch occupies residues 1–198 (MSCQISCRSR…DPEIQNVKSQ (198 aa)). An Asymmetric dimethylarginine modification is found at Arg-22. Ser-25 and Ser-28 each carry phosphoserine. Positions 29–38 (AVVSGGSRRS) are enriched in low complexity. Residues 29–59 (AVVSGGSRRSNTSFSCISRHGGGRGGSGGGG) form a disordered region. The residue at position 52 (Arg-52) is an Omega-N-methylarginine. Residue Ser-64 is modified to Phosphoserine. The coil 1A stretch occupies residues 199–234 (EREQIKTLNNKFASFIDKVRFLEQQNQVLRTKWELL). The IF rod domain occupies 199-512 (EREQIKTLNN…KLLEGEECRM (314 aa)). Residues 235-253 (QQLDVGSRTTNLDPIFQAY) form a linker 1 region. The tract at residues 254–345 (IGMLKKQVDR…TLYDAELSQL (92 aa)) is coil 1B. A linker 12 region spans residues 346–369 (QQDVTDTNVILSMDNNRNLDLDSI). The tract at residues 370 to 508 (IAEVQNQYEM…ATYRKLLEGE (139 aa)) is coil 2. The segment at 509 to 707 (ECRMSGDFSD…CGSGVTFSFR (199 aa)) is tail. A disordered region spans residues 531 to 707 (SSVASKTGFG…CGSGVTFSFR (177 aa)). Residues 539-700 (FGSGGQSSGG…GSGSGEGCGS (162 aa)) show a composition bias toward gly residues. Omega-N-methylarginine is present on residues Arg-555, Arg-593, Arg-607, and Arg-675.

This sequence belongs to the intermediate filament family. Heterotetramer of two type I and two type II keratins. Associates with KRT10. Expressed predominantly in the suprabasal layers of the plantar epidermis outside of the footpads (at protein level). Expressed in the suprabasal layers of the interfollicular epidermis of the ear, in the interscale regions distant from the hair follicles in the tail, and in the soles of the footpads (at protein level). Expressed mainly in the middle spinous and granular cells of the epidermis of adult tail, nipple and footsole skin. Also found in ear.

It is found in the cytoplasm. Its function is as follows. Probably contributes to terminal cornification. Associated with keratinocyte activation, proliferation and keratinization. Required for maintenance of corneocytes and keratin filaments in suprabasal keratinocytes in the epidermis of the ear, potentially via moderation of expression and localization of keratins and their partner proteins. Plays a role in the establishment of the epidermal barrier on plantar skin. The protein is Keratin, type II cytoskeletal 2 epidermal of Mus musculus (Mouse).